The sequence spans 506 residues: Steroid (22S)-hydroxylase (506 aa).

Residues 12-32 form a helical membrane-spanning segment; the sequence is LLFFLPFILLALLTFYTTTVA. A heme-binding site is contributed by Cys-449.

The protein belongs to the cytochrome P450 family. Requires heme as cofactor. Highly expressed in roots and leaf blades. Expressed in shoot apex, stems, leaf sheaths, inflorescences and flowers.

The protein resides in the membrane. The catalysed reaction is a C28-steroid + reduced [NADPH--hemoprotein reductase] + O2 = a (22S)-22-hydroxy C28-steroid + oxidized [NADPH--hemoprotein reductase] + H2O + H(+). It catalyses the reaction campesterol + reduced [NADPH--hemoprotein reductase] + O2 = (22S)-22-hydroxycampesterol + oxidized [NADPH--hemoprotein reductase] + H2O + H(+). It carries out the reaction campestanol + reduced [NADPH--hemoprotein reductase] + O2 = 6-deoxycathasterone + oxidized [NADPH--hemoprotein reductase] + H2O + H(+). It functions in the pathway plant hormone biosynthesis; brassinosteroid biosynthesis. In terms of biological role, catalyzes the C22-alpha-hydroxylation step in brassinosteroid biosynthesis, which is the rate-limiting step in this biosynthetic pathway. Catalyzes the conversion of campesterol (CR) to (22S)-22-hydroxycampesterol (22-OHCR, 22-hydroxyCR) and of campestanol (CN) to 6-deoxycathasterone (6-deoxoCT). Required for auxin responses involved in the regulation of epidermal cells length of the lamina joint. This is Steroid (22S)-hydroxylase from Oryza sativa subsp. japonica (Rice).